The following is a 417-amino-acid chain: Metal-binding activator 1 (417 aa).

Residues 1–40 constitute a DNA-binding region (copper-fist); that stretch reads MIIFNGNKYACASCIRGHRSSTCRHSHRMLIKVRTRGRPS. Zn(2+) is bound by residues cysteine 11, cysteine 14, cysteine 23, and histidine 25. 2 disordered regions span residues 128–198 and 216–242; these read FLRK…IFTP and YNSSVPGAHDSSETLTPQSTTTIAAPH. Serine 143 is modified (phosphoserine). Over residues 153-178 the composition is skewed to basic and acidic residues; that stretch reads SEKKERSRLQQEPIRHFSNCCKKDKS. 2 stretches are compositionally biased toward polar residues: residues 179–190 and 228–238; these read QNPASNGKTNKA and ETLTPQSTTTI. A run of 2 repeats spans residues 264-279 and 322-337. Positions 264–337 are 2 X 16 AA repeat of C-X-C-X(4)-C-X-C-X-X-C-X-X-H; sequence CSCEDESCPC…NCTCDGCFSH (74 aa).

The protein resides in the nucleus. Regulatory protein involved in Cu/Fe utilization and stress resistance. Involved in basal level transcription of FRE1 and H(2)O(2)-induced transcription of CTT1. Regulates the transcription of CTR1 and CTR3 via the copper ion responsive elements in their promoters. Required for degradation of CTR1. The chain is Metal-binding activator 1 (MAC1) from Saccharomyces cerevisiae (strain ATCC 204508 / S288c) (Baker's yeast).